The primary structure comprises 418 residues: UDP-N-acetylglucosamine 1-carboxyvinyltransferase (418 aa).

22–23 (KN) lines the phosphoenolpyruvate pocket. Arginine 91 contributes to the UDP-N-acetyl-alpha-D-glucosamine binding site. Residue cysteine 115 is the Proton donor of the active site. Cysteine 115 carries the post-translational modification 2-(S-cysteinyl)pyruvic acid O-phosphothioketal. Positions 303 and 325 each coordinate UDP-N-acetyl-alpha-D-glucosamine.

This sequence belongs to the EPSP synthase family. MurA subfamily.

Its subcellular location is the cytoplasm. It catalyses the reaction phosphoenolpyruvate + UDP-N-acetyl-alpha-D-glucosamine = UDP-N-acetyl-3-O-(1-carboxyvinyl)-alpha-D-glucosamine + phosphate. It functions in the pathway cell wall biogenesis; peptidoglycan biosynthesis. In terms of biological role, cell wall formation. Adds enolpyruvyl to UDP-N-acetylglucosamine. In Syntrophobacter fumaroxidans (strain DSM 10017 / MPOB), this protein is UDP-N-acetylglucosamine 1-carboxyvinyltransferase.